We begin with the raw amino-acid sequence, 170 residues long: ATP synthase F(1) complex subunit delta, mitochondrial (170 aa).

A mitochondrion-targeting transit peptide spans 1-33 (MIRSIIKSSNNLLKSNVAINSNKRFFATEASAT).

Belongs to the ATPase epsilon chain family. In terms of assembly, component of the ATP synthase complex composed at least of ATP5F1A/subunit alpha, ATP5F1B/subunit beta, ATP5MC1/subunit c (homooctomer), MT-ATP6/subunit a, MT-ATP8/subunit 8, ATP5ME/subunit e, ATP5MF/subunit f, ATP5MG/subunit g, ATP5MK/subunit k, ATP5MJ/subunit j, ATP5F1C/subunit gamma, ATP5F1D/subunit delta, ATP5F1E/subunit epsilon, ATP5PF/subunit F6, ATP5PB/subunit b, ATP5PD/subunit d, ATP5PO/subunit OSCP. ATP synthase complex consists of a soluble F(1) head domain (subunits alpha(3) and beta(3)) - the catalytic core - and a membrane F(0) domain - the membrane proton channel (subunits c, a, 8, e, f, g, k and j). These two domains are linked by a central stalk (subunits gamma, delta, and epsilon) rotating inside the F1 region and a stationary peripheral stalk (subunits F6, b, d, and OSCP).

The protein localises to the mitochondrion. The protein resides in the mitochondrion inner membrane. Functionally, subunit delta, of the mitochondrial membrane ATP synthase complex (F(1)F(0) ATP synthase or Complex V) that produces ATP from ADP in the presence of a proton gradient across the membrane which is generated by electron transport complexes of the respiratory chain. ATP synthase complex consist of a soluble F(1) head domain - the catalytic core - and a membrane F(1) domain - the membrane proton channel. These two domains are linked by a central stalk rotating inside the F(1) region and a stationary peripheral stalk. During catalysis, ATP synthesis in the catalytic domain of F(1) is coupled via a rotary mechanism of the central stalk subunits to proton translocation. In vivo, can only synthesize ATP although its ATP hydrolase activity can be activated artificially in vitro. With the central stalk subunit gamma, is essential for the biogenesis of F(1) catalytic part of the ATP synthase complex namely in the formation of F1 assembly intermediate. This Dictyostelium discoideum (Social amoeba) protein is ATP synthase F(1) complex subunit delta, mitochondrial.